We begin with the raw amino-acid sequence, 241 residues long: 3-oxoacyl-[acyl-carrier-protein] reductase FabG (241 aa).

Residues 13 to 16, serine 38, 57 to 58, and asparagine 83 each bind NADP(+); these read GASS and EV. A substrate-binding site is contributed by serine 135. The active-site Proton acceptor is the tyrosine 148. Residues 148–152 and isoleucine 181 each bind NADP(+); that span reads YCASK.

The protein belongs to the short-chain dehydrogenases/reductases (SDR) family. In terms of assembly, homotetramer.

It catalyses the reaction a (3R)-hydroxyacyl-[ACP] + NADP(+) = a 3-oxoacyl-[ACP] + NADPH + H(+). It functions in the pathway lipid metabolism; fatty acid biosynthesis. Its function is as follows. Catalyzes the NADPH-dependent reduction of beta-ketoacyl-ACP substrates to beta-hydroxyacyl-ACP products, the first reductive step in the elongation cycle of fatty acid biosynthesis. In Rickettsia prowazekii (strain Madrid E), this protein is 3-oxoacyl-[acyl-carrier-protein] reductase FabG (fabG).